Consider the following 159-residue polypeptide: Sperm acrosome-associated protein 5 (159 aa).

The N-terminal stretch at 1-21 (MKAWGTVVVTLATLMVVTVDA) is a signal peptide. Positions 22–150 (KIYERCELAA…SEWLKGCDMH (129 aa)) constitute a C-type lysozyme domain. 4 disulfide bridges follow: C27-C147, C51-C135, C85-C100, and C96-C114. E56 is a catalytic residue.

It belongs to the glycosyl hydrolase 22 family.

The protein resides in the secreted. It catalyses the reaction Hydrolysis of (1-&gt;4)-beta-linkages between N-acetylmuramic acid and N-acetyl-D-glucosamine residues in a peptidoglycan and between N-acetyl-D-glucosamine residues in chitodextrins.. The polypeptide is Sperm acrosome-associated protein 5 (SPACA5) (Homo sapiens (Human)).